The chain runs to 952 residues: Alpha-L-rhamnosidase (952 aa).

An N-terminal signal peptide occupies residues 1 to 21 (MKYNKLLFSLLLLAVFCFSCK). Alpha-L-rhamnose is bound by residues Asp-520, 524–525 (RE), Asp-532, and Trp-594. Glu-525 functions as the Proton donor in the catalytic mechanism. Residue Glu-809 is the Proton acceptor of the active site. An alpha-L-rhamnose-binding site is contributed by His-826.

Belongs to the glycosyl hydrolase 78 family.

Its subcellular location is the cell membrane. The catalysed reaction is Hydrolysis of terminal non-reducing alpha-L-rhamnose residues in alpha-L-rhamnosides.. Alpha-L-rhamnosidase that may be involved in ulvan degradation. Ulvan is the main polysaccharide component of the Ulvales (green seaweed) cell wall. It is composed of disaccharide building blocks comprising 3-sulfated rhamnose (Rha3S) linked to D-glucuronic acid (GlcA), L-iduronic acid (IduA), or D-xylose (Xyl). In Formosa agariphila (strain DSM 15362 / KCTC 12365 / LMG 23005 / KMM 3901 / M-2Alg 35-1), this protein is Alpha-L-rhamnosidase.